A 212-amino-acid polypeptide reads, in one-letter code: Fe/S biogenesis protein NfuA (212 aa).

[4Fe-4S] cluster-binding residues include Cys169 and Cys172.

The protein belongs to the NfuA family. Homodimer. The cofactor is [4Fe-4S] cluster.

Functionally, involved in iron-sulfur cluster biogenesis. Binds a 4Fe-4S cluster, can transfer this cluster to apoproteins, and thereby intervenes in the maturation of Fe/S proteins. Could also act as a scaffold/chaperone for damaged Fe/S proteins. In Acinetobacter baumannii (strain SDF), this protein is Fe/S biogenesis protein NfuA.